A 219-amino-acid chain; its full sequence is Thiopurine S-methyltransferase (219 aa).

4 residues coordinate S-adenosyl-L-methionine: W10, L45, E66, and R123.

Belongs to the class I-like SAM-binding methyltransferase superfamily. TPMT family.

It localises to the cytoplasm. The enzyme catalyses S-adenosyl-L-methionine + a thiopurine = S-adenosyl-L-homocysteine + a thiopurine S-methylether.. The sequence is that of Thiopurine S-methyltransferase from Bordetella petrii (strain ATCC BAA-461 / DSM 12804 / CCUG 43448).